Here is a 483-residue protein sequence, read N- to C-terminus: 2-methylcitrate dehydratase (483 aa).

Belongs to the PrpD family. As to quaternary structure, monomer.

It carries out the reaction (2S,3S)-2-methylcitrate = 2-methyl-cis-aconitate + H2O. The enzyme catalyses citrate = D-threo-isocitrate. It functions in the pathway organic acid metabolism; propanoate degradation. The protein operates within carbohydrate metabolism; tricarboxylic acid cycle; isocitrate from oxaloacetate: step 2/2. In terms of biological role, involved in the catabolism of short chain fatty acids (SCFA) via the tricarboxylic acid (TCA)(acetyl degradation route) and via the 2-methylcitrate cycle I (propionate degradation route). Catalyzes the dehydration of 2-methylcitrate (2-MC) to yield the cis isomer of 2-methyl-aconitate. It is also able to catalyze the dehydration of citrate and the hydration of cis-aconitate at a lower rate. Due to its broad substrate specificity, it seems to be responsible for the residual aconitase activity of the acnAB-null mutant. This chain is 2-methylcitrate dehydratase, found in Escherichia coli (strain K12).